Here is a 465-residue protein sequence, read N- to C-terminus: Probable multidrug resistance protein NorM (465 aa).

11 helical membrane-spanning segments follow: residues 61–83, 104–126, 141–163, 170–192, 202–224, 251–273, 283–305, 326–348, 368–390, 403–425, and 435–457; these read VLAGQFFFVVFIFGSGFSVAVVP, GMWVAIAYWLLALPIFFNAERIL, HYLAIAKFGLLPALLFYVLRGLV, GIILYVTIIMLVMNGLMAYVLVF, MNGAAVVAVIVNAFSFIFIVAYV, LRLGLPISITILAEVTLFAAASI, LAAHGIALQLASIAFMIPLGLSQ, ASIMIYAIACGIALCGGILFAAV, LAYASSLVVIAGIFQLVDGIQAV, IPAMLALISYWPIGLALAWTMAF, and WFGFVIGLSTAAVLLTVRFVLLV.

The protein belongs to the multi antimicrobial extrusion (MATE) (TC 2.A.66.1) family.

It localises to the cell inner membrane. In terms of biological role, multidrug efflux pump. The polypeptide is Probable multidrug resistance protein NorM (norM) (Agrobacterium fabrum (strain C58 / ATCC 33970) (Agrobacterium tumefaciens (strain C58))).